The following is a 418-amino-acid chain: Creatine kinase U-type, mitochondrial (418 aa).

The transit peptide at 1-39 (MAGPFSRLLSARPGLKLLALAGAGSLAAGILLRPESVRA) directs the protein to the mitochondrion. The cardiolipin-binding stretch occupies residues 40–64 (ATGERRRLYPPSAEYPDLRKHNNCM). The Phosphagen kinase N-terminal domain maps to 46 to 132 (RLYPPSAEYP…FDPVIQERHN (87 aa)). S152 is subject to Phosphoserine. The Phosphagen kinase C-terminal domain occupies 159 to 401 (YVLSSRVRTG…NYLIDCERRL (243 aa)). 162–166 (SSRVR) provides a ligand contact to ATP. S197 carries the phosphoserine modification. Phosphothreonine is present on T214. Residue H225 participates in ATP binding. S233 is modified (phosphoserine). Residues R270, R326, 354-359 (RGTGGV), and D369 contribute to the ATP site. At T356 the chain carries Phosphothreonine.

This sequence belongs to the ATP:guanido phosphotransferase family. As to quaternary structure, exists as an octamer composed of four MTCK homodimers. As to expression, in many tissues, with highest levels in brain gut and kidney. In the kidney localized primarily in the outer medulla in the thick ascending limb and distal convoluted tubule.

The protein resides in the mitochondrion inner membrane. It catalyses the reaction creatine + ATP = N-phosphocreatine + ADP + H(+). Reversibly catalyzes the transfer of phosphate between ATP and various phosphogens (e.g. creatine phosphate). Creatine kinase isoenzymes play a central role in energy transduction in tissues with large, fluctuating energy demands, such as skeletal muscle, heart, brain and spermatozoa. The sequence is that of Creatine kinase U-type, mitochondrial (Ckmt1) from Rattus norvegicus (Rat).